We begin with the raw amino-acid sequence, 377 residues long: Putative glutamate--cysteine ligase 2 (377 aa).

It belongs to the glutamate--cysteine ligase type 2 family. YbdK subfamily.

It carries out the reaction L-cysteine + L-glutamate + ATP = gamma-L-glutamyl-L-cysteine + ADP + phosphate + H(+). Its function is as follows. ATP-dependent carboxylate-amine ligase which exhibits weak glutamate--cysteine ligase activity. This is Putative glutamate--cysteine ligase 2 from Pseudomonas aeruginosa (strain LESB58).